Reading from the N-terminus, the 202-residue chain is Peptidyl-tRNA hydrolase (202 aa).

Position 14 (tyrosine 14) interacts with tRNA. The active-site Proton acceptor is the histidine 19. Positions 64, 66, and 112 each coordinate tRNA.

The protein belongs to the PTH family. Monomer.

It is found in the cytoplasm. It catalyses the reaction an N-acyl-L-alpha-aminoacyl-tRNA + H2O = an N-acyl-L-amino acid + a tRNA + H(+). In terms of biological role, hydrolyzes ribosome-free peptidyl-tRNAs (with 1 or more amino acids incorporated), which drop off the ribosome during protein synthesis, or as a result of ribosome stalling. Catalyzes the release of premature peptidyl moieties from peptidyl-tRNA molecules trapped in stalled 50S ribosomal subunits, and thus maintains levels of free tRNAs and 50S ribosomes. The polypeptide is Peptidyl-tRNA hydrolase (Nitrobacter winogradskyi (strain ATCC 25391 / DSM 10237 / CIP 104748 / NCIMB 11846 / Nb-255)).